A 310-amino-acid polypeptide reads, in one-letter code: Inorganic pyrophosphatase, mitochondrial (310 aa).

Residues 1-30 constitute a mitochondrion transit peptide; sequence MNLLRMNALTSKARSIERLKQTLNILSIRN. 3 residues coordinate Mg(2+): Asp-152, Asp-157, and Asp-189.

The protein belongs to the PPase family. In terms of assembly, homodimer that binds non-covalently to a protein complex in the inner mitochondrial membrane. Mg(2+) serves as cofactor.

It is found in the mitochondrion. The enzyme catalyses diphosphate + H2O = 2 phosphate + H(+). Involved in energy production. Its activity is stimulated by uncouplers of ATP synthesis. The polypeptide is Inorganic pyrophosphatase, mitochondrial (PPA2) (Saccharomyces cerevisiae (strain ATCC 204508 / S288c) (Baker's yeast)).